A 703-amino-acid chain; its full sequence is Elongation factor G 1 (703 aa).

Residues 8 to 290 (ERYRNIGISA…AVIDFLPSPV (283 aa)) form the tr-type G domain. GTP is bound by residues 17–24 (AHIDAGKT), 88–92 (DTPGH), and 142–145 (NKMD).

This sequence belongs to the TRAFAC class translation factor GTPase superfamily. Classic translation factor GTPase family. EF-G/EF-2 subfamily.

The protein localises to the cytoplasm. Its function is as follows. Catalyzes the GTP-dependent ribosomal translocation step during translation elongation. During this step, the ribosome changes from the pre-translocational (PRE) to the post-translocational (POST) state as the newly formed A-site-bound peptidyl-tRNA and P-site-bound deacylated tRNA move to the P and E sites, respectively. Catalyzes the coordinated movement of the two tRNA molecules, the mRNA and conformational changes in the ribosome. This chain is Elongation factor G 1, found in Cupriavidus metallidurans (strain ATCC 43123 / DSM 2839 / NBRC 102507 / CH34) (Ralstonia metallidurans).